Reading from the N-terminus, the 588-residue chain is Polyphenol oxidase II, chloroplastic (588 aa).

The span at 1 to 10 (MASFTTSPCT) shows a compositional bias: polar residues. The segment at 1–32 (MASFTTSPCTSAAPKTPKSLSSSATISSPLPK) is disordered. The N-terminal 50 residues, 1–50 (MASFTTSPCTSAAPKTPKSLSSSATISSPLPKPSQIHIATAKRTHHFKVS), are a transit peptide targeting the chloroplast. Positions 16–29 (TPKSLSSSATISSP) are enriched in low complexity. The N-terminal 38 residues, 51-88 (CNAPNGDSQPKLDRRDVLLGLGGLAGAASLINNPLAFA), are a transit peptide targeting the thylakoid. 2 cysteine pairs are disulfide-bonded: Cys-99-Cys-116 and Cys-115-Cys-179. Residues His-178, His-199, His-208, His-330, His-334, and His-366 each contribute to the Cu cation site. The segment at residues 182-199 (CNGGYVQTDYPDKEIQVH) is a cross-link (2'-(S-cysteinyl)-histidine (Cys-His)).

Belongs to the tyrosinase family. In terms of assembly, monomer. Requires Cu(2+) as cofactor.

It localises to the plastid. Its subcellular location is the chloroplast thylakoid lumen. It catalyses the reaction 2 catechol + O2 = 2 1,2-benzoquinone + 2 H2O. Functionally, catalyzes the oxidation of mono- and o-diphenols to o-diquinones. The polypeptide is Polyphenol oxidase II, chloroplastic (co-2) (Ipomoea batatas (Sweet potato)).